Here is a 419-residue protein sequence, read N- to C-terminus: Argininosuccinate synthase (419 aa).

ATP contacts are provided by residues 9-17 (AYSGGLDTS) and A35. L-citrulline contacts are provided by Y86 and S91. An ATP-binding site is contributed by 114-122 (AHGATGKGN). Residues T118, N122, and D123 each coordinate L-aspartate. Residue N122 participates in L-citrulline binding. L-citrulline-binding residues include R126, S179, S188, E270, and Y282.

The protein belongs to the argininosuccinate synthase family. Type 1 subfamily. As to quaternary structure, homotetramer.

The catalysed reaction is L-citrulline + L-aspartate + ATP = 2-(N(omega)-L-arginino)succinate + AMP + diphosphate + H(+). Its pathway is amino-acid biosynthesis; L-arginine biosynthesis; L-arginine from L-ornithine and carbamoyl phosphate: step 2/3. The protein operates within nitrogen metabolism; urea cycle; (N(omega)-L-arginino)succinate from L-aspartate and L-citrulline: step 1/1. This Drosophila melanogaster (Fruit fly) protein is Argininosuccinate synthase.